The sequence spans 543 residues: Exodeoxyribonuclease 7 large subunit (543 aa).

The tract at residues 498-543 (VTGEGDKASPPPQAASATTTPAPGRPNPLPKSPKKSEPPAGQGSLF) is disordered.

Belongs to the XseA family. In terms of assembly, heterooligomer composed of large and small subunits.

Its subcellular location is the cytoplasm. The catalysed reaction is Exonucleolytic cleavage in either 5'- to 3'- or 3'- to 5'-direction to yield nucleoside 5'-phosphates.. Its function is as follows. Bidirectionally degrades single-stranded DNA into large acid-insoluble oligonucleotides, which are then degraded further into small acid-soluble oligonucleotides. The chain is Exodeoxyribonuclease 7 large subunit from Allorhizobium ampelinum (strain ATCC BAA-846 / DSM 112012 / S4) (Agrobacterium vitis (strain S4)).